The following is a 370-amino-acid chain: Aminomethyltransferase (370 aa).

It belongs to the GcvT family. The glycine cleavage system is composed of four proteins: P, T, L and H.

It catalyses the reaction N(6)-[(R)-S(8)-aminomethyldihydrolipoyl]-L-lysyl-[protein] + (6S)-5,6,7,8-tetrahydrofolate = N(6)-[(R)-dihydrolipoyl]-L-lysyl-[protein] + (6R)-5,10-methylene-5,6,7,8-tetrahydrofolate + NH4(+). The glycine cleavage system catalyzes the degradation of glycine. The sequence is that of Aminomethyltransferase from Clostridium botulinum (strain 657 / Type Ba4).